The sequence spans 262 residues: Snake venom serine proteinase 9 (262 aa).

The signal sequence occupies residues 1 to 18; the sequence is MVLIRVLANLLILQLSYA. The propeptide occupies 19-24; sequence QKSSEL. A Peptidase S1 domain is found at 25 to 253; that stretch reads VIGGDECNID…HLDWIQSIIA (229 aa). Intrachain disulfides connect Cys31–Cys165, Cys52–Cys68, Cys144–Cys214, Cys176–Cys193, and Cys204–Cys229. Catalysis depends on His67, which acts as the Charge relay system. The N-linked (GlcNAc...) asparagine glycan is linked to Asn105. Asp112 acts as the Charge relay system in catalysis. The active-site Charge relay system is the Ser208.

This sequence belongs to the peptidase S1 family. Snake venom subfamily. In terms of assembly, monomer. As to expression, expressed by the venom gland.

The protein resides in the secreted. Functionally, snake venom serine protease that may act in the hemostasis system of the prey. The polypeptide is Snake venom serine proteinase 9 (Crotalus adamanteus (Eastern diamondback rattlesnake)).